A 212-amino-acid polypeptide reads, in one-letter code: 3-isopropylmalate dehydratase small subunit 2 (212 aa).

Belongs to the LeuD family. LeuD type 1 subfamily. As to quaternary structure, heterodimer of LeuC and LeuD.

The enzyme catalyses (2R,3S)-3-isopropylmalate = (2S)-2-isopropylmalate. It functions in the pathway amino-acid biosynthesis; L-leucine biosynthesis; L-leucine from 3-methyl-2-oxobutanoate: step 2/4. Functionally, catalyzes the isomerization between 2-isopropylmalate and 3-isopropylmalate, via the formation of 2-isopropylmaleate. The protein is 3-isopropylmalate dehydratase small subunit 2 of Chromobacterium violaceum (strain ATCC 12472 / DSM 30191 / JCM 1249 / CCUG 213 / NBRC 12614 / NCIMB 9131 / NCTC 9757 / MK).